Here is a 220-residue protein sequence, read N- to C-terminus: Large ribosomal subunit protein uL6c (220 aa).

The N-terminal 38 residues, 1–38, are a transit peptide targeting the chloroplast; it reads MSLPLPSHMKSVFLGMKVEISTSVPVTRIGFWRKSVDC.

In terms of assembly, component of the chloroplast large ribosomal subunit (LSU). Mature 70S chloroplast ribosomes of higher plants consist of a small (30S) and a large (50S) subunit. The 30S small subunit contains 1 molecule of ribosomal RNA (16S rRNA) and 24 different proteins. The 50S large subunit contains 3 rRNA molecules (23S, 5S and 4.5S rRNA) and 33 different proteins.

The protein resides in the plastid. It localises to the chloroplast. Component of the chloroplast ribosome (chloro-ribosome), a dedicated translation machinery responsible for the synthesis of chloroplast genome-encoded proteins, including proteins of the transcription and translation machinery and components of the photosynthetic apparatus. The sequence is that of Large ribosomal subunit protein uL6c (RPL6) from Spinacia oleracea (Spinach).